A 152-amino-acid polypeptide reads, in one-letter code: Deoxyuridine 5'-triphosphate nucleotidohydrolase (152 aa).

Substrate-binding positions include 72 to 74, Asn85, and 89 to 91; these read RSG and TID.

This sequence belongs to the dUTPase family. It depends on Mg(2+) as a cofactor.

The catalysed reaction is dUTP + H2O = dUMP + diphosphate + H(+). The protein operates within pyrimidine metabolism; dUMP biosynthesis; dUMP from dCTP (dUTP route): step 2/2. This enzyme is involved in nucleotide metabolism: it produces dUMP, the immediate precursor of thymidine nucleotides and it decreases the intracellular concentration of dUTP so that uracil cannot be incorporated into DNA. The protein is Deoxyuridine 5'-triphosphate nucleotidohydrolase of Rhodopseudomonas palustris (strain HaA2).